The sequence spans 558 residues: Protein S10 (558 aa).

Residues 539–558 (SSNTSSHEHTQKIVLNKVTR) form a disordered region.

This Avena sativa (Oat) protein is Protein S10 (S10).